Reading from the N-terminus, the 92-residue chain is Small ribosomal subunit protein uS19c (92 aa).

This sequence belongs to the universal ribosomal protein uS19 family.

The protein localises to the plastid. It localises to the chloroplast. In terms of biological role, protein S19 forms a complex with S13 that binds strongly to the 16S ribosomal RNA. The protein is Small ribosomal subunit protein uS19c of Spirogyra maxima (Green alga).